The primary structure comprises 427 residues: Dihydroorotase (427 aa).

Residues H57 and H59 each contribute to the Zn(2+) site. Residues 59 to 61 (HLR) and N91 contribute to the substrate site. Zn(2+) contacts are provided by D149, H176, and H229. N275 is a substrate binding site. D302 is a binding site for Zn(2+). Residue D302 is part of the active site. Substrate contacts are provided by residues H306 and 320–321 (FG).

Belongs to the metallo-dependent hydrolases superfamily. DHOase family. Class I DHOase subfamily. Zn(2+) is required as a cofactor.

The enzyme catalyses (S)-dihydroorotate + H2O = N-carbamoyl-L-aspartate + H(+). It functions in the pathway pyrimidine metabolism; UMP biosynthesis via de novo pathway; (S)-dihydroorotate from bicarbonate: step 3/3. Functionally, catalyzes the reversible cyclization of carbamoyl aspartate to dihydroorotate. This chain is Dihydroorotase, found in Shouchella clausii (strain KSM-K16) (Alkalihalobacillus clausii).